Here is a 418-residue protein sequence, read N- to C-terminus: ORC1-type DNA replication protein 2 (418 aa).

ATP is bound by residues 72 to 76 (TGKTV), Y218, and R230.

This sequence belongs to the CDC6/cdc18 family.

Involved in regulation of DNA replication. The chain is ORC1-type DNA replication protein 2 (cdc6-2) from Sulfurisphaera tokodaii (strain DSM 16993 / JCM 10545 / NBRC 100140 / 7) (Sulfolobus tokodaii).